We begin with the raw amino-acid sequence, 3313 residues long: PHD finger protein rhinoceros (3313 aa).

Residues 1-16 show a composition bias toward basic residues; that stretch reads MSQRGKRGNQHHHQSH. The segment at 1–136 is disordered; the sequence is MSQRGKRGNQ…QGASTSSSWQ (136 aa). 2 stretches are compositionally biased toward low complexity: residues 42-71 and 100-134; these read PPNGATTAAAAIAAAAAAAAAAAAGTATGG and LGAASSSSSITKSKSTKLAKSSSKSKSQGASTSSS. The PHD-type 1 zinc finger occupies 323-373; sequence NVICDVCRSPDSEEANEMVFCDNCNICVHQACYGITAIPSGQWLCRTCSMG. The C2HC pre-PHD-type zinc finger occupies 375–409; sequence TPDCVLCPNKAGAMKSNKSGKHWAHVSCALWIPEV. The PHD-type 2; degenerate zinc finger occupies 433 to 487; the sequence is LVCVLCRKRVGSCIQCSKHSMSKGKKENAGGASGGGSASVTSSMHKANKYATGTG. Disordered regions lie at residues 453-526, 708-1076, 1107-1842, 1961-2033, 2104-2136, 2145-2164, 2219-2252, 2353-2374, 2398-2514, 2563-2587, 2647-2679, 2827-2871, 2888-2954, 2978-2998, 3017-3077, 3144-3233, and 3259-3313; these read MSKG…ARAQ, LQSG…TKAA, KEAK…PPSH, AQKE…TMGN, PVTAQSGAGSNSNKLSDYDENTRMQSPFGRMQR, ARRSSSPSSVSESNDQPPAT, AAPQQQTTPTHQQQQQQQQQQQQQRTPNSQFNGG, PAYPAHPAHPAHPAHPAHPAHP, VAAK…PPPM, TTRGQPKPTPAPTAATTTNPLLHPV, ATGTGTSPSKHPAVSAAPVAPAPAPAANSQPPA, SCGL…SSSR, LAGA…IKIR, YEMTRRACPPKKRLTSNYSTP, DFDK…SATT, KAEK…SLPE, and YENS…CEVR. Residues 512–526 show a composition bias toward basic and acidic residues; that stretch reads KNDMTSEERNQARAQ. Residues 735–749 show a composition bias toward polar residues; it reads KKLNNGAITSRTSSP. A compositionally biased stretch (low complexity) spans 760–772; that stretch reads STSTSTATATTAA. A compositionally biased stretch (polar residues) spans 792–802; that stretch reads GAATGTSTHNK. Low complexity-rich tracts occupy residues 803–861 and 894–912; these read TQSQ…ASGI and EAAAGASAASPNSRSATSS. Basic and acidic residues predominate over residues 919–934; the sequence is QQRRRQEPERERDGRG. Polar residues predominate over residues 942–955; it reads TVPNRTQPTKSKQS. Low complexity predominate over residues 956 to 972; the sequence is TQADAGSGAGTGAAVET. The span at 994–1003 shows a compositional bias: acidic residues; it reads ESLSSDESEE. The segment covering 1015–1025 has biased composition (low complexity); that stretch reads AALSSGLAASG. Residues 1058-1072 show a composition bias toward polar residues; that stretch reads VESNVSDSQNQQTIR. Composition is skewed to basic and acidic residues over residues 1159-1168 and 1178-1205; these read AADRMREPES and KLKDSGSKQATEADKFGGGDKVRSKEQS. Over residues 1250-1266 the composition is skewed to low complexity; that stretch reads EAKSTAPAAKPTAAKTS. The span at 1285 to 1301 shows a compositional bias: polar residues; sequence LKSSKPLQDTTFSTANE. Low complexity-rich tracts occupy residues 1308–1324, 1377–1404, and 1451–1464; these read AATTATTTGMTTLGVAT, SSSSSGDSDSSSSSSSSGSSSSSGSGSD, and PAASAAAAAAAAAT. Polar residues predominate over residues 1475–1485; it reads TARTRQNSTNK. Over residues 1551-1579 the composition is skewed to basic and acidic residues; it reads SPEKQTARRKSRADESPKKIPNLEHEINQ. Over residues 1638 to 1650 the composition is skewed to acidic residues; sequence PVVEPEVETEIEP. The span at 1667 to 1678 shows a compositional bias: polar residues; it reads TAPTHTQLSANA. Residues 1691-1702 are compositionally biased toward pro residues; sequence PAAPLPASPTPT. Basic residues predominate over residues 1722 to 1734; sequence SRWRSRRRRRRRS. A coiled-coil region spans residues 1744-1773; it reads HTQHLLNEMEMARELEEERKNELLANASKY. Residues 1753–1765 are compositionally biased toward basic and acidic residues; the sequence is EMARELEEERKNE. Polar residues-rich tracts occupy residues 1771 to 1781 and 1796 to 1805; these read SKYSASTSSPA and DSNSANSGGD. Residues 1806 to 1819 are compositionally biased toward low complexity; sequence QQQQQQQQPLPQQL. Over residues 1823–1832 the composition is skewed to polar residues; the sequence is SPSSEVASTI. Low complexity predominate over residues 1965–1984; sequence QQQQQQQQQQQQQQQQQQQQ. 2 stretches are compositionally biased toward polar residues: residues 1985–1999 and 2007–2018; these read SCLYGNSSGPNSVAS and MTANSGSYANSL. Residues 2019–2033 show a composition bias toward low complexity; it reads TNTPNATPTNATMGN. Residues 2106–2118 show a composition bias toward polar residues; the sequence is TAQSGAGSNSNKL. Composition is skewed to low complexity over residues 2148–2157 and 2222–2242; these read SSSPSSVSES and QQQTTPTHQQQQQQQQQQQQQ. A compositionally biased stretch (pro residues) spans 2439-2451; it reads PVQPQPPTPPAPA. The span at 2479 to 2488 shows a compositional bias: gly residues; it reads GSGGSGAPGR. Residues 2658–2679 are compositionally biased toward low complexity; the sequence is PAVSAAPVAPAPAPAANSQPPA. Residues 2891–2900 are compositionally biased toward gly residues; that stretch reads ASGGGAGTAS. Polar residues predominate over residues 2909–2924; sequence CSSGSNNDNNGKTGAA. A compositionally biased stretch (basic and acidic residues) spans 2935–2946; sequence KTLESSEDDHQT. The span at 3017–3026 shows a compositional bias: basic and acidic residues; that stretch reads DFDKGEENNK. The segment covering 3046–3065 has biased composition (basic residues); the sequence is KRPKSSKPKKDKKEKKRQKQ. The span at 3179–3198 shows a compositional bias: polar residues; it reads TSPQGLLLNSFTPHSQNANA. Low complexity predominate over residues 3268-3290; the sequence is SASGTGSASSNSCNSNSNNNNNN. Over residues 3291-3302 the composition is skewed to gly residues; that stretch reads GSGGGAASGGGS.

Belongs to the JADE family.

Its subcellular location is the nucleus. Its function is as follows. May function as a negative regulator of the EGFR/Ras/MAPK signaling pathway during eye development. The sequence is that of PHD finger protein rhinoceros (rno) from Drosophila pseudoobscura pseudoobscura (Fruit fly).